Consider the following 131-residue polypeptide: Profilin-1 (131 aa).

C13 and C115 are disulfide-bonded. The Involved in PIP2 interaction motif lies at 81-97 (RVIRGKKGAGGITIKKT). T111 carries the post-translational modification Phosphothreonine.

It belongs to the profilin family. In terms of assembly, occurs in many kinds of cells as a complex with monomeric actin in a 1:1 ratio.

It is found in the cytoplasm. Its subcellular location is the cytoskeleton. In terms of biological role, binds to actin and affects the structure of the cytoskeleton. At high concentrations, profilin prevents the polymerization of actin, whereas it enhances it at low concentrations. By binding to PIP2, it inhibits the formation of IP3 and DG. In Phleum pratense (Common timothy), this protein is Profilin-1 (PRO1).